A 151-amino-acid polypeptide reads, in one-letter code: Small ribosomal subunit protein uS15 (151 aa).

Belongs to the universal ribosomal protein uS15 family. As to quaternary structure, component of the small ribosomal subunit. Mature ribosomes consist of a small (40S) and a large (60S) subunit. The 40S subunit contains about 32 different proteins and 1 molecule of RNA (18S). The 60S subunit contains 45 different proteins and 3 molecules of RNA (25S, 5.8S and 5S).

Its subcellular location is the cytoplasm. Functionally, component of the ribosome, a large ribonucleoprotein complex responsible for the synthesis of proteins in the cell. The small ribosomal subunit (SSU) binds messenger RNAs (mRNAs) and translates the encoded message by selecting cognate aminoacyl-transfer RNA (tRNA) molecules. The large subunit (LSU) contains the ribosomal catalytic site termed the peptidyl transferase center (PTC), which catalyzes the formation of peptide bonds, thereby polymerizing the amino acids delivered by tRNAs into a polypeptide chain. The nascent polypeptides leave the ribosome through a tunnel in the LSU and interact with protein factors that function in enzymatic processing, targeting, and the membrane insertion of nascent chains at the exit of the ribosomal tunnel. This Candida albicans (strain SC5314 / ATCC MYA-2876) (Yeast) protein is Small ribosomal subunit protein uS15 (RPS13).